The primary structure comprises 415 residues: WD-40 repeat-containing protein MSI2 (415 aa).

WD repeat units follow at residues 166–206 (GHDK…QDKV), 215–255 (GHES…MQHQ), 258–298 (VHER…APLH), 302–342 (SHEG…EEQL), and 361–401 (GHKA…YRDE). Residues 232-248 (LFGSAGEDGRLVIWDTR) carry the DWD box motif.

Belongs to the WD repeat RBAP46/RBAP48/MSI1 family.

It localises to the nucleus. Its function is as follows. Core histone-binding subunit that may target chromatin assembly factors, chromatin remodeling factors and histone deacetylases to their histone substrates in a manner that is regulated by nucleosomal DNA. This chain is WD-40 repeat-containing protein MSI2 (MSI2), found in Arabidopsis thaliana (Mouse-ear cress).